The sequence spans 78 residues: Omega-conotoxin-like VnMKLT1-0111 (78 aa).

A signal peptide spans 1–22 (MKLTCMMIVAVLFLTAWTFVTA). The propeptide occupies 23 to 48 (DSRNGLEYLFPKAHYEMNPEASKLNK). 3 disulfides stabilise this stretch: C52-C69, C59-C73, and C68-C77.

Belongs to the conotoxin O1 superfamily. As to expression, expressed by the venom duct.

The protein resides in the secreted. Its function is as follows. Omega-conotoxins act at presynaptic membranes, they bind and block voltage-gated calcium channels (Cav). This Conus ventricosus (Mediterranean cone) protein is Omega-conotoxin-like VnMKLT1-0111.